The sequence spans 267 residues: GTP cyclohydrolase FolE2 2 (267 aa).

This sequence belongs to the GTP cyclohydrolase IV family.

The enzyme catalyses GTP + H2O = 7,8-dihydroneopterin 3'-triphosphate + formate + H(+). The protein operates within cofactor biosynthesis; 7,8-dihydroneopterin triphosphate biosynthesis; 7,8-dihydroneopterin triphosphate from GTP: step 1/1. In terms of biological role, converts GTP to 7,8-dihydroneopterin triphosphate. This Cupriavidus metallidurans (strain ATCC 43123 / DSM 2839 / NBRC 102507 / CH34) (Ralstonia metallidurans) protein is GTP cyclohydrolase FolE2 2.